The chain runs to 739 residues: ABC transporter G family member 20 (739 aa).

The ABC transporter domain maps to 88–351 (LSFKDLTYSV…FSEFGHPIPE (264 aa)). 144 to 151 (GASGSGKS) contributes to the ATP binding site. The ABC transmembrane type-2 domain maps to 433–643 (TEMLVIGKRS…PYEGVLQNEF (211 aa)). 6 helical membrane-spanning segments follow: residues 452-472 (LFGI…TIFW), 487-507 (FFAF…PVFL), 528-548 (VLAH…AFAA), 563-583 (FLFF…FVTF), 593-613 (IGFT…GFFI), and 712-732 (LWIT…TLLI).

It belongs to the ABC transporter superfamily. ABCG family. Eye pigment precursor importer (TC 3.A.1.204) subfamily.

The protein resides in the membrane. This is ABC transporter G family member 20 (ABCG20) from Arabidopsis thaliana (Mouse-ear cress).